We begin with the raw amino-acid sequence, 243 residues long: Bidirectional sugar transporter SWEET2a (243 aa).

The signal sequence occupies residues 1–15; it reads MMNALGLSVAATSTG. The Extracellular segment spans residues 16–24; sequence SPFHDVCCY. Residues 25–45 traverse the membrane as a helical segment; it reads GAGIAGNIFALVLFISPLPTF. The MtN3/slv 1 domain occupies 27–112; that stretch reads GIAGNIFALV…ATFIAFADAK (86 aa). Topologically, residues 46–56 are cytoplasmic; the sequence is KRIVRNGSTEQ. A helical transmembrane segment spans residues 57–79; it reads FSAMPYIYSLLNCLICLWYGLPF. Residues 80–90 are Extracellular-facing; the sequence is VSYGVVLVATV. Residues 91-111 traverse the membrane as a helical segment; that stretch reads NSIGALFQLAYTATFIAFADA. The Cytoplasmic portion of the chain corresponds to 112-118; sequence KNRVKVS. Residues 119-139 traverse the membrane as a helical segment; sequence SLLVMVFGVFALIVYVSLALF. The Extracellular portion of the chain corresponds to 140-146; it reads DHQTRQL. A helical membrane pass occupies residues 147–167; sequence FVGYLSVASLIFMFASPLSII. Residues 147–229 form the MtN3/slv 2 domain; that stretch reads FVGYLSVASL…QLVLYGYFRK (83 aa). At 168–180 the chain is on the cytoplasmic side; the sequence is NLVIRTKSVEYMP. The helical transmembrane segment at 181 to 201 threads the bilayer; sequence FYLSLSMFLMSVSFFAYGVLL. At 202 to 203 the chain is on the extracellular side; that stretch reads HD. The helical transmembrane segment at 204–224 threads the bilayer; the sequence is FFIYIPNGIGTVLGVIQLVLY. Residues 225 to 243 lie on the Cytoplasmic side of the membrane; sequence GYFRKGSREDSLPLLVTHT.

Belongs to the SWEET sugar transporter family. In terms of assembly, forms homooligomers and/or heterooligomers.

It is found in the cell membrane. Its function is as follows. Mediates both low-affinity uptake and efflux of sugar across the plasma membrane. In Oryza sativa subsp. indica (Rice), this protein is Bidirectional sugar transporter SWEET2a (SWEET2A).